The sequence spans 508 residues: Photosystem II CP47 reaction center protein (508 aa).

A run of 6 helical transmembrane segments spans residues 21-36 (SVHI…WAGS), 101-115 (IVFS…IWHW), 140-156 (GIHL…FGAF), 203-218 (IAAG…FHLS), 237-252 (VLSS…AFVV), and 457-472 (SFAL…HGAR).

The protein belongs to the PsbB/PsbC family. PsbB subfamily. PSII is composed of 1 copy each of membrane proteins PsbA, PsbB, PsbC, PsbD, PsbE, PsbF, PsbH, PsbI, PsbJ, PsbK, PsbL, PsbM, PsbT, PsbX, PsbY, PsbZ, Psb30/Ycf12, at least 3 peripheral proteins of the oxygen-evolving complex and a large number of cofactors. It forms dimeric complexes. Requires Binds multiple chlorophylls. PSII binds additional chlorophylls, carotenoids and specific lipids. as cofactor.

It is found in the plastid. The protein resides in the chloroplast thylakoid membrane. One of the components of the core complex of photosystem II (PSII). It binds chlorophyll and helps catalyze the primary light-induced photochemical processes of PSII. PSII is a light-driven water:plastoquinone oxidoreductase, using light energy to abstract electrons from H(2)O, generating O(2) and a proton gradient subsequently used for ATP formation. The sequence is that of Photosystem II CP47 reaction center protein from Gossypium hirsutum (Upland cotton).